We begin with the raw amino-acid sequence, 224 residues long: Cytidylate kinase (224 aa).

11–19 (GPAAAGKST) is a binding site for ATP.

This sequence belongs to the cytidylate kinase family. Type 1 subfamily.

The protein resides in the cytoplasm. It catalyses the reaction CMP + ATP = CDP + ADP. The catalysed reaction is dCMP + ATP = dCDP + ADP. This is Cytidylate kinase from Geobacillus sp. (strain WCH70).